A 241-amino-acid chain; its full sequence is ATP synthase subunit a (241 aa).

The next 8 helical transmembrane spans lie at 29-49 (NSSF…LFGI), 54-74 (VIPG…ISII), 86-106 (IPLI…GVLP), 114-134 (HVIV…IVGF), 153-173 (WLAP…PVSL), 177-197 (LAAN…FIVN), 200-220 (IFFT…EVFV), and 221-241 (AILQ…DAVK).

This sequence belongs to the ATPase A chain family. F-type ATPases have 2 components, CF(1) - the catalytic core - and CF(0) - the membrane proton channel. CF(1) has five subunits: alpha(3), beta(3), gamma(1), delta(1), epsilon(1). CF(0) has three main subunits: a(1), b(2) and c(9-12). The alpha and beta chains form an alternating ring which encloses part of the gamma chain. CF(1) is attached to CF(0) by a central stalk formed by the gamma and epsilon chains, while a peripheral stalk is formed by the delta and b chains.

It is found in the cell membrane. In terms of biological role, key component of the proton channel; it plays a direct role in the translocation of protons across the membrane. This is ATP synthase subunit a from Wolbachia pipientis wMel.